The primary structure comprises 211 residues: LexA repressor (211 aa).

The H-T-H motif DNA-binding region spans 30-50; that stretch reads RVEIAREIGFKSPNAAEEHLK. Catalysis depends on for autocatalytic cleavage activity residues S128 and K165.

This sequence belongs to the peptidase S24 family. Homodimer.

It carries out the reaction Hydrolysis of Ala-|-Gly bond in repressor LexA.. Represses a number of genes involved in the response to DNA damage (SOS response), including recA and lexA. In the presence of single-stranded DNA, RecA interacts with LexA causing an autocatalytic cleavage which disrupts the DNA-binding part of LexA, leading to derepression of the SOS regulon and eventually DNA repair. The chain is LexA repressor from Haemophilus ducreyi (strain 35000HP / ATCC 700724).